We begin with the raw amino-acid sequence, 146 residues long: Protein LDOC1 (146 aa).

The protein belongs to the LDOC1 family. As to quaternary structure, interacts with NOD2. As to expression, ubiquitously expressed with high levels in brain ant thyroid and low expression in placenta, liver and leukocytes. Expressed as well in six of the seven human breast cancer cell lines examined.

The protein localises to the nucleus. May have an important role in the development and/or progression of some cancers. This chain is Protein LDOC1 (LDOC1), found in Homo sapiens (Human).